Reading from the N-terminus, the 279-residue chain is CDP-paratose synthase (279 aa).

Residue tyrosine 115 is the Proton acceptor of the active site.

Belongs to the NAD(P)-dependent epimerase/dehydratase family.

It catalyses the reaction CDP-alpha-D-paratose + NADP(+) = CDP-4-dehydro-3,6-dideoxy-alpha-D-glucose + NADPH + H(+). Its pathway is nucleotide-sugar biosynthesis; CDP-3,6-dideoxy-D-mannose biosynthesis; CDP-3,6-dideoxy-D-mannose from CTP and alpha-D-glucose 1-phosphate: step 4/5. Functionally, catalyzes synthesis of paratose and tyvelose, unusual 3,6-dideoxyhexose sugars that form part of the O-antigen in the lipopolysaccharides of several enteric bacteria. This is CDP-paratose synthase (rfbS) from Salmonella typhi.